A 519-amino-acid polypeptide reads, in one-letter code: Cytochrome P450 monooxygenase FPY7 (519 aa).

Residues 12–34 (SLSLRWKIIVTLLAIYTLRIIGT) traverse the membrane as a helical segment. Cys465 serves as a coordination point for heme.

The protein belongs to the cytochrome P450 family. Heme serves as cofactor.

It is found in the membrane. It participates in secondary metabolite biosynthesis. Its function is as follows. Cytochrome P450 monooxygenase; part of the gene cluster that mediates the biosynthesis of the gamma-pyrones fusapyrone (FPY) and deoxyfusapyrone (dFPY). FPY is an undecaketide and thus likely synthesized by the polyketide synthase FPY1 from acetyl-CoA functioning as starter unit and the addition of 10 malonyl-CoA extender units by successive Claisen-condensations. Next to this, FPY shares some rare features: C-glycosylated 4-deoxyglucose at C-3, a gem-dimethyl group at C-13, and an alpha-beta to beta-gamma double bond shift at C-20. During FPY biosynthesis mono-C-methyl groups are transferred to the tetra-, penta-, hexa- and heptaketide, while two C-methyl groups are transferred to the nonaketide, suggesting that the CMet domain is programmed to selectively catalyze two successive C-alpha-methylation reactions of the nonaketide, while other alpha-carbons are non- or mono-methylated only. While the origin of the 4'-deoxyglucose moiety remains opaque, its transfer to C-3 is most likely mediated by the C-glycosyltransferase FPY2. Next to this, the hydroxyl group present at C-33 and discriminating between FPY and dFPY, is likely to be installed by the cytochrome P450 monooxygenase FPY7. No putative function can be predicted for the remaining genes FPY3-FPY6. The chain is Cytochrome P450 monooxygenase FPY7 from Fusarium mangiferae (Mango malformation disease fungus).